The primary structure comprises 1399 residues: DNA-directed RNA polymerase subunit beta' (1399 aa).

Residues Cys-70, Cys-72, Cys-85, and Cys-88 each contribute to the Zn(2+) site. Mg(2+) is bound by residues Asp-460, Asp-462, and Asp-464. Zn(2+) is bound by residues Cys-814, Cys-888, Cys-895, and Cys-898.

It belongs to the RNA polymerase beta' chain family. In terms of assembly, the RNAP catalytic core consists of 2 alpha, 1 beta, 1 beta' and 1 omega subunit. When a sigma factor is associated with the core the holoenzyme is formed, which can initiate transcription. It depends on Mg(2+) as a cofactor. Zn(2+) serves as cofactor.

It catalyses the reaction RNA(n) + a ribonucleoside 5'-triphosphate = RNA(n+1) + diphosphate. Its function is as follows. DNA-dependent RNA polymerase catalyzes the transcription of DNA into RNA using the four ribonucleoside triphosphates as substrates. This Pseudomonas fluorescens (strain SBW25) protein is DNA-directed RNA polymerase subunit beta'.